The chain runs to 1673 residues: Glutamine and serine-rich protein 1 (1673 aa).

Disordered stretches follow at residues 265-322 (VIPS…SSQA), 411-543 (DQTR…KSYV), 872-892 (RHMSPNFTPPKPQNMNNLSIN), 923-961 (QDLPSGMVSPVPGANQDDHEKNSENIKNPPNVNQEPKEG), 1050-1081 (DENANLKQIKRNMPLKRSVSKGPDVPGAQYSS), 1149-1182 (VIRPPCPGPLSPQSVAGAPVSDSGSASPPKKAEE), 1216-1272 (LSAL…EQLA), and 1390-1476 (KSKV…PPPI). Polar residues predominate over residues 289–309 (SSKTPKSQSVVSPELTQSYTK). Composition is skewed to low complexity over residues 310-322 (SSQNQSSVNSSQA) and 411-458 (DQTR…PSDS). Residues 459–539 (YTSGQNQTLA…MQNSRTTADS (81 aa)) are compositionally biased toward polar residues. The segment covering 947-956 (NIKNPPNVNQ) has biased composition (polar residues). A compositionally biased stretch (basic and acidic residues) spans 1222–1233 (NSEKRLKTEGDK). Composition is skewed to polar residues over residues 1259–1272 (KPSQPEATQPEQLA) and 1397–1411 (ARTTHTKASGGSKVS). Residues 1435–1451 (TKAEPPPKKRKQWKEEF) show a composition bias toward basic and acidic residues. Low complexity predominate over residues 1452-1462 (SSSQSDSSPDM).

It is found in the chromosome. Plays an essential role in the protection and maintenance of transcriptional and developmental programs. Protects many bivalent promoters and poised enhancers from hypermethylation, showing a marked preference for these regulatory elements over other types of promoters or enhancers. Mechanistically, cooperates with tet1 and binds to DNA in a common complex to inhibit the binding of dnmt3a/3b and therefore de novo methylation. This Xenopus laevis (African clawed frog) protein is Glutamine and serine-rich protein 1 (qser1).